Reading from the N-terminus, the 243-residue chain is Tryptophan synthase alpha chain (243 aa).

Residues Glu-31 and Asp-42 each act as proton acceptor in the active site.

The protein belongs to the TrpA family. Tetramer of two alpha and two beta chains.

It catalyses the reaction (1S,2R)-1-C-(indol-3-yl)glycerol 3-phosphate + L-serine = D-glyceraldehyde 3-phosphate + L-tryptophan + H2O. It participates in amino-acid biosynthesis; L-tryptophan biosynthesis; L-tryptophan from chorismate: step 5/5. In terms of biological role, the alpha subunit is responsible for the aldol cleavage of indoleglycerol phosphate to indole and glyceraldehyde 3-phosphate. This is Tryptophan synthase alpha chain from Staphylococcus epidermidis (strain ATCC 35984 / DSM 28319 / BCRC 17069 / CCUG 31568 / BM 3577 / RP62A).